Consider the following 141-residue polypeptide: Hemoglobin subunit alpha-1/2 (141 aa).

The Globin domain maps to 1–141 (VLSPADKTNV…VSTVLTSKYR (141 aa)). Ser3 carries the phosphoserine modification. Lys7 is modified (N6-succinyllysine). A Phosphothreonine modification is found at Thr8. The residue at position 11 (Lys11) is an N6-succinyllysine. Lys16 bears the N6-acetyllysine; alternate mark. The residue at position 16 (Lys16) is an N6-succinyllysine; alternate. Tyr24 carries the post-translational modification Phosphotyrosine. Ser35 is subject to Phosphoserine. Position 40 is an N6-succinyllysine (Lys40). Ser49 carries the phosphoserine modification. O2 is bound at residue His58. Position 87 (His87) interacts with heme b. Position 102 is a phosphoserine (Ser102). Residue Thr108 is modified to Phosphothreonine. Residues Ser124 and Ser131 each carry the phosphoserine modification. Residues Thr134 and Thr137 each carry the phosphothreonine modification. Residue Ser138 is modified to Phosphoserine.

The protein belongs to the globin family. Heterotetramer of two alpha chains and two beta chains. As to expression, red blood cells.

In terms of biological role, involved in oxygen transport from the lung to the various peripheral tissues. The chain is Hemoglobin subunit alpha-1/2 from Macaca sinica (Toque macaque).